The primary structure comprises 168 residues: Thiol peroxidase (168 aa).

Positions 19–168 (PQAGSKAQAF…YDAALNVLKA (150 aa)) constitute a Thioredoxin domain. Cysteine 61 (cysteine sulfenic acid (-SOH) intermediate) is an active-site residue. A disulfide bridge links cysteine 61 with cysteine 95.

The protein belongs to the peroxiredoxin family. Tpx subfamily. In terms of assembly, homodimer.

The enzyme catalyses a hydroperoxide + [thioredoxin]-dithiol = an alcohol + [thioredoxin]-disulfide + H2O. Thiol-specific peroxidase that catalyzes the reduction of hydrogen peroxide and organic hydroperoxides to water and alcohols, respectively. Plays a role in cell protection against oxidative stress by detoxifying peroxides. In Salmonella typhimurium (strain LT2 / SGSC1412 / ATCC 700720), this protein is Thiol peroxidase.